The chain runs to 787 residues: Penicillin-binding protein 1A (787 aa).

Residues 1 to 6 (MYKSLF) are Cytoplasmic-facing. A helical; Signal-anchor for type II membrane protein transmembrane segment spans residues 7-27 (LCLKIFAVLILIGCSVTAYII). Residues 28–787 (YHYSHDLPDY…GMLDQSQEIY (760 aa)) are Periplasmic-facing. The transglycosylase stretch occupies residues 49-220 (TRIYSRDGKL…SELNPDKNYS (172 aa)). Glu87 acts as the Proton donor; for transglycosylase activity in catalysis. A transpeptidase region spans residues 398–711 (DVIVVEPIKD…SNVVLPIFID (314 aa)). Catalysis depends on Ser457, which acts as the Acyl-ester intermediate; for transpeptidase activity.

This sequence in the N-terminal section; belongs to the glycosyltransferase 51 family. In the C-terminal section; belongs to the transpeptidase family.

The protein resides in the cell inner membrane. It catalyses the reaction [GlcNAc-(1-&gt;4)-Mur2Ac(oyl-L-Ala-gamma-D-Glu-L-Lys-D-Ala-D-Ala)](n)-di-trans,octa-cis-undecaprenyl diphosphate + beta-D-GlcNAc-(1-&gt;4)-Mur2Ac(oyl-L-Ala-gamma-D-Glu-L-Lys-D-Ala-D-Ala)-di-trans,octa-cis-undecaprenyl diphosphate = [GlcNAc-(1-&gt;4)-Mur2Ac(oyl-L-Ala-gamma-D-Glu-L-Lys-D-Ala-D-Ala)](n+1)-di-trans,octa-cis-undecaprenyl diphosphate + di-trans,octa-cis-undecaprenyl diphosphate + H(+). The enzyme catalyses Preferential cleavage: (Ac)2-L-Lys-D-Ala-|-D-Ala. Also transpeptidation of peptidyl-alanyl moieties that are N-acyl substituents of D-alanine.. Its pathway is cell wall biogenesis; peptidoglycan biosynthesis. Its function is as follows. Cell wall formation. Synthesis of cross-linked peptidoglycan from the lipid intermediates. The enzyme has a penicillin-insensitive transglycosylase N-terminal domain (formation of linear glycan strands) and a penicillin-sensitive transpeptidase C-terminal domain (cross-linking of the peptide subunits). The sequence is that of Penicillin-binding protein 1A (mrcA) from Rickettsia prowazekii (strain Madrid E).